Consider the following 105-residue polypeptide: UPF0060 membrane protein Rmet_4032 (105 aa).

4 helical membrane-spanning segments follow: residues 4 to 24, 28 to 48, 60 to 80, and 82 to 102; these read VGLY…PYLW, GASP…AWLL, AAYG…VDGV, and PSPW…IIVF.

It belongs to the UPF0060 family.

The protein resides in the cell inner membrane. This is UPF0060 membrane protein Rmet_4032 from Cupriavidus metallidurans (strain ATCC 43123 / DSM 2839 / NBRC 102507 / CH34) (Ralstonia metallidurans).